A 54-amino-acid polypeptide reads, in one-letter code: Large ribosomal subunit protein bL33C (54 aa).

The protein belongs to the bacterial ribosomal protein bL33 family.

The chain is Large ribosomal subunit protein bL33C from Streptomyces griseus subsp. griseus (strain JCM 4626 / CBS 651.72 / NBRC 13350 / KCC S-0626 / ISP 5235).